The following is a 581-amino-acid chain: Ezrin (581 aa).

One can recognise an FERM domain in the interval 2–295 (PKPINVRVTT…GNHELYMRRR (294 aa)). K60 is modified (N6-acetyllysine). The short motif at 115 to 120 (IYCPPE) is the [IL]-x-C-x-x-[DE] motif element. Y146 is subject to Phosphotyrosine; by PDGFR. The interval 244–581 (EIRNISFNDK…KQRIDEFEAM (338 aa)) is interaction with SCYL3. A coiled-coil region spans residues 302–462 (VQQMKAQARE…QDDLVKTREE (161 aa)). Residues 306-341 (KAQAREEKHQKQLERQQLETEKKRRETVEREKEQMM) are disordered. Residues 308–341 (QAREEKHQKQLERQQLETEKKRRETVEREKEQMM) are compositionally biased toward basic and acidic residues. Y354 bears the Phosphotyrosine; by PDGFR mark. S366 is modified (phosphoserine). Phosphotyrosine is present on Y476. Residues 534–560 (SQARDENKRTHNDIIHNENMRQGRDKY) form a disordered region. A compositionally biased stretch (basic and acidic residues) spans 535–560 (QARDENKRTHNDIIHNENMRQGRDKY). T562 is modified (phosphothreonine; by ROCK2 and PKC/PRKCI).

In terms of assembly, interacts with PALS1 and NHERF2. Found in a complex with EZR, PODXL and NHERF2. Interacts with MCC, PLEKHG6, PODXL, SCYL3/PACE1, NHERF1 and TMEM8B. Interacts (when phosphorylated) with FES/FPS. Interacts with dimeric S100P, the interaction may be activating through unmasking of F-actin binding sites. Identified in complexes that contain VIM, EZR, AHNAK, BFSP1, BFSP2, ANK2, PLEC, PRX and spectrin. Detected in a complex composed of at least EZR, AHNAK, PPL and PRX. Interacts with PDPN (via cytoplasmic domain); activates RHOA and promotes epithelial-mesenchymal transition. Interacts with SPN/CD43 cytoplasmic tail, CD44 and ICAM2. Interacts with SLC9A3; interaction targets SLC9A3 to the apical membrane. Interacts with SLC9A1; regulates interactions of SLC9A1 with cytoskeletal and promotes stress fiber formation. Interacts with CLIC5; may work together in a complex which also includes RDX and MYO6 to stabilize linkages between the plasma membrane and subjacent actin cytoskeleton at the base of stereocilia. Post-translationally, phosphorylated by tyrosine-protein kinases. Phosphorylation by ROCK2 suppresses the head-to-tail association of the N-terminal and C-terminal halves resulting in an opened conformation which is capable of actin and membrane-binding. In terms of processing, S-nitrosylation is induced by interferon-gamma and oxidatively-modified low-densitity lipoprotein (LDL(ox)) possibly implicating the iNOS-S100A8/9 transnitrosylase complex. In terms of tissue distribution, detected in eye lens fiber cells (at protein level).

It localises to the apical cell membrane. Its subcellular location is the cell projection. It is found in the microvillus membrane. The protein resides in the ruffle membrane. The protein localises to the cytoplasm. It localises to the cell cortex. Its subcellular location is the cytoskeleton. It is found in the microvillus. With respect to regulation, a head-to-tail association, of the N-terminal and C-terminal halves results in a closed conformation (inactive form) which is incapable of actin or membrane-binding. Functionally, probably involved in connections of major cytoskeletal structures to the plasma membrane. In epithelial cells, required for the formation of microvilli and membrane ruffles on the apical pole. Along with PLEKHG6, required for normal macropinocytosis. The protein is Ezrin (EZR) of Bos taurus (Bovine).